A 220-amino-acid chain; its full sequence is Outer membrane protein assembly factor BamD (220 aa).

Residues 1–22 (MRLKHFKTFLFITMAIIVIGTG) form the signal peptide. Residue cysteine 23 is the site of N-palmitoyl cysteine attachment. Cysteine 23 carries the S-diacylglycerol cysteine lipid modification.

It belongs to the BamD family. As to quaternary structure, part of the Bam complex.

It localises to the cell outer membrane. Functionally, part of the outer membrane protein assembly complex, which is involved in assembly and insertion of beta-barrel proteins into the outer membrane. The protein is Outer membrane protein assembly factor BamD of Helicobacter pylori (strain ATCC 700392 / 26695) (Campylobacter pylori).